The sequence spans 739 residues: Disintegrin and metalloproteinase domain-containing protein 18 (739 aa).

The signal sequence occupies residues 1–16 (MFLLLALLTELGRLQA). Residues 17–184 (HEGSEGIFLH…IKNLSKLLPQ (168 aa)) constitute a propeptide that is removed on maturation. N-linked (GlcNAc...) asparagine glycans are attached at residues Asn36, Asn76, Asn122, Asn149, Asn156, Asn177, and Asn294. Residues 177 to 687 (NLSKLLPQYL…EKGYNTHWNN (511 aa)) are Extracellular-facing. In terms of domain architecture, Peptidase M12B spans 184-381 (QYLEIYIIVE…FETKCLQKLS (198 aa)). Cystine bridges form between Cys293–Cys376, Cys335–Cys360, Cys337–Cys342, and Cys450–Cys471. 5 N-linked (GlcNAc...) asparagine glycosylation sites follow: Asn359, Asn465, Asn561, Asn611, and Asn625. One can recognise a Disintegrin domain in the interval 390–479 (QPVCGNGILE…NCVPDTYALN (90 aa)). Residues 620-654 (MGYNCNATTKCKGKGICNNFGNCQCFPGHRPPDCK) enclose the EGF-like domain. 3 disulfide bridges follow: Cys624–Cys636, Cys630–Cys642, and Cys644–Cys653. A helical membrane pass occupies residues 688–708 (WFILSFCIFLPFFIVFTTVIF). At 709–739 (KRNEISKSCNRENAEYNRNSSVVSESDDVGH) the chain is on the cytoplasmic side.

Post-translationally, the prodomain and the metalloprotease-like domain are cleaved during the epididymal maturation of the spermatozoa. Expressed specifically in testis.

It is found in the membrane. In terms of biological role, sperm surface membrane protein that may be involved in spermatogenesis and fertilization. This is a non catalytic metalloprotease-like protein. In Homo sapiens (Human), this protein is Disintegrin and metalloproteinase domain-containing protein 18 (ADAM18).